The following is a 130-amino-acid chain: Small ribosomal subunit protein uS8 (130 aa).

This sequence belongs to the universal ribosomal protein uS8 family. In terms of assembly, component of the 40S ribosomal subunit. Part of the small subunit (SSU) processome, composed of more than 70 proteins and the RNA chaperone small nucleolar RNA (snoRNA) U3.

The protein localises to the cytoplasm. It localises to the nucleus. It is found in the nucleolus. Component of the small ribosomal subunit. Part of the small subunit (SSU) processome, first precursor of the small eukaryotic ribosomal subunit. During the assembly of the SSU processome in the nucleolus, many ribosome biogenesis factors, an RNA chaperone and ribosomal proteins associate with the nascent pre-rRNA and work in concert to generate RNA folding, modifications, rearrangements and cleavage as well as targeted degradation of pre-ribosomal RNA by the RNA exosome. Required for erythropoiesis during embryonic development. The polypeptide is Small ribosomal subunit protein uS8 (Danio rerio (Zebrafish)).